The following is a 64-amino-acid chain: Large ribosomal subunit protein uL30 (64 aa).

Belongs to the universal ribosomal protein uL30 family. In terms of assembly, part of the 50S ribosomal subunit.

This is Large ribosomal subunit protein uL30 from Methylorubrum populi (strain ATCC BAA-705 / NCIMB 13946 / BJ001) (Methylobacterium populi).